The chain runs to 1453 residues: Collagen alpha-1(I) chain (1453 aa).

A signal peptide spans 1-22; that stretch reads MFSFVDSRLLLLIAATVLLTRG. A propeptide spans 23 to 151 (N-terminal propeptide); it reads EGEEDIQTGS…PPGLGGNFAP (129 aa). One can recognise a VWFC domain in the interval 31-89; sequence GSCVQDGLTYNDKDVWKPEPCQICVCDSGNILCDEVICEDTSDCPNAEIPFGECCPICP. Residues 98–1203 form a disordered region; the sequence is PESAGVEGPK…PQEKAHDGGR (1106 aa). Residues 106 to 116 are compositionally biased toward basic and acidic residues; the sequence is PKGDTGPRGDR. A compositionally biased stretch (pro residues) spans 131-143; the sequence is PGLPGPPGPPGPP. At glutamine 152 the chain carries Pyrrolidone carboxylic acid. Lysine 160 is subject to Allysine. Positions 162–176 are enriched in low complexity; the sequence is AGVAVPGPMGPAGPR. 11 positions are modified to 4-hydroxyproline: proline 179, proline 182, proline 185, proline 194, proline 197, proline 200, proline 215, proline 230, proline 236, proline 245, and proline 251. A compositionally biased stretch (low complexity) spans 187-206; that stretch reads PQGFQGPPGEPGEPGASGPM. Residue lysine 254 is modified to 5-hydroxylysine; alternate. Residue lysine 254 is glycosylated (O-linked (Gal...) hydroxylysine; partial). The segment covering 265 to 284 has biased composition (low complexity); sequence AKGQPGPAGPKGEPGSPGEN. Residues proline 269, proline 278, proline 281, proline 287, proline 296, proline 302, proline 317, proline 323, proline 332, and proline 335 each carry the 4-hydroxyproline modification. Low complexity predominate over residues 307–319; sequence PAGARGNDGAPGA. The segment covering 320 to 334 has biased composition (pro residues); it reads AGPPGPTGPAGPPGF. Residues 350–361 show a composition bias toward low complexity; sequence RGSEGPQGSRGE. 8 positions are modified to 4-hydroxyproline: proline 362, proline 365, proline 377, proline 383, proline 392, proline 398, proline 401, and proline 416. Residues 368–418 show a composition bias toward low complexity; sequence AGAAGPAGNPGADGQPGAKGATGAPGIAGAPGFPGARGPSGPQGPSGAPGP. Lysine 419 is subject to 5-hydroxylysine. A 4-hydroxyproline mark is found at proline 425, proline 428, proline 440, proline 449, proline 464, proline 470, proline 479, and proline 485. Residues 463-482 are compositionally biased toward low complexity; that stretch reads EPGPAGLPGPAGERGAPGSR. Position 494 is a 5-hydroxylysine (lysine 494). Proline 497, proline 503, proline 512, proline 518, proline 524, proline 533, proline 536, proline 545, proline 554, proline 560, proline 572, proline 581, proline 584, proline 590, proline 593, proline 611, proline 629, proline 635, proline 641, proline 647, proline 653, proline 659, proline 671, proline 680, proline 692, proline 704, proline 707, proline 713, proline 719, proline 728, and proline 737 each carry 4-hydroxyproline. Residues 527–581 show a composition bias toward low complexity; the sequence is KGLTGSPGSPGPDGKTGPPGPAGQDGRPGPAGPPGARGQAGVMGFPGPKGAAGEP. A compositionally biased stretch (low complexity) spans 623 to 664; sequence QGPAGAPGFQGLPGPAGPPGEAGKPGEQGVPGNAGAPGPAGA. Residues 685–722 show a composition bias toward low complexity; sequence PRGANGAPGNDGAKGDAGAPGAPGNEGPPGLEGMPGER. Position 740 is a 5-hydroxylysine (lysine 740). A 4-hydroxyproline mark is found at proline 746, proline 761, proline 767, proline 776, proline 788, proline 794, proline 797, proline 806, proline 812, proline 830, proline 839, and proline 848. Residues 800 to 827 are compositionally biased toward low complexity; it reads AGFAGPPGADGQPGAKGETGDAGAKGDA. Residues 835–883 are compositionally biased toward low complexity; that stretch reads PTGAPGPAGZVGAPGPKGARGSAGPPGATGFPGAAGRVGPPGPSGNIGL. The residue at position 851 (lysine 851) is a 5-hydroxylysine. Proline 860 and proline 866 each carry 4-hydroxyproline. 3-hydroxyproline is present on proline 874. A 4-hydroxyproline mark is found at proline 875, proline 884, proline 887, proline 908, proline 911, proline 917, proline 920, proline 926, proline 935, proline 953, proline 962, proline 965, proline 971, proline 986, proline 992, proline 998, proline 1007, and proline 1013. Residues 890 to 908 are compositionally biased toward low complexity; the sequence is AGKZGSKGPRGETGPAGRP. The span at 910 to 920 shows a compositional bias: pro residues; it reads EPGPAGPPGPP. Residues 985 to 995 are compositionally biased toward pro residues; it reads PPGPMGPPGLA. A compositionally biased stretch (low complexity) spans 997–1021; the sequence is PPGEAGREGAPGAEGAPGRDGAAGP. 5-hydroxylysine; partial is present on lysine 1022. Residues 1031-1046 are compositionally biased toward pro residues; the sequence is AGPPGAPGAPGAPGPV. 4 positions are modified to 4-hydroxyproline: proline 1034, proline 1037, proline 1040, and proline 1067. A compositionally biased stretch (low complexity) spans 1070-1081; that stretch reads AGARGPAGPQGP. The span at 1082 to 1096 shows a compositional bias: basic and acidic residues; the sequence is RGDKGETGEQGDRGM. 5-hydroxylysine; partial is present on lysine 1085. Residue lysine 1097 is modified to 5-hydroxylysine; alternate. A glycan (O-linked (Gal...) hydroxylysine; partial) is linked at lysine 1097. 5 positions are modified to 4-hydroxyproline: proline 1109, proline 1112, proline 1115, proline 1133, and proline 1148. Positions 1115–1139 are enriched in low complexity; sequence PGEQGPSGASGPAGPRGPPGSAGAA. Position 1153 is a 3-hydroxyproline (proline 1153). 4-hydroxyproline is present on proline 1154. Residues 1166 to 1181 are compositionally biased toward pro residues; the sequence is VGPPGPPGPPGPPGPP. Proline 1168 is subject to 3-hydroxyproline. Proline 1169 carries the post-translational modification 4-hydroxyproline. At proline 1171 the chain carries 3-hydroxyproline. Position 1172 is a 4-hydroxyproline (proline 1172). At proline 1174 the chain carries 3-hydroxyproline. 4-hydroxyproline is present on residues proline 1175, proline 1178, and proline 1181. Residue lysine 1197 is modified to Allysine. Residues 1208–1453 constitute a propeptide, C-terminal propeptide; it reads DDANVMRDRD…GIDIGPVCFL (246 aa). The Fibrillar collagen NC1 domain maps to 1218 to 1453; it reads LEVDTTLKSL…GIDIGPVCFL (236 aa). 3 disulfides stabilise this stretch: cysteine 1248–cysteine 1280, cysteine 1288–cysteine 1451, and cysteine 1359–cysteine 1404. Aspartate 1266, asparagine 1268, glutamine 1269, cysteine 1271, and aspartate 1274 together coordinate Ca(2+). Asparagine 1354 carries N-linked (GlcNAc...) asparagine glycosylation.

It belongs to the fibrillar collagen family. Trimers of one alpha 2(I) and two alpha 1(I) chains. Post-translationally, contains mostly 4-hydroxyproline. Proline residues at the third position of the tripeptide repeating unit (G-X-Y) are 4-hydroxylated in some or all of the chains. In terms of processing, contains 3-hydroxyproline. This modification occurs on the first proline residue in the sequence motif Gly-Pro-Hyp, where Hyp is 4-hydroxyproline. Lysine residues at the third position of the tripeptide repeating unit (G-X-Y) are 5-hydroxylated in some or all of the chains. Post-translationally, O-glycosylated on hydroxylated lysine residues. The O-linked glycan consists of a Glc-Gal disaccharide. In terms of tissue distribution, forms the fibrils of tendon, ligaments and bones. In bones the fibrils are mineralized with calcium hydroxyapatite.

Its subcellular location is the secreted. It is found in the extracellular space. The protein localises to the extracellular matrix. Functionally, type I collagen is a member of group I collagen (fibrillar forming collagen). In Gallus gallus (Chicken), this protein is Collagen alpha-1(I) chain (COL1A1).